Reading from the N-terminus, the 307-residue chain is UDP-N-acetylenolpyruvoylglucosamine reductase (307 aa).

One can recognise an FAD-binding PCMH-type domain in the interval valine 34–glycine 197. Residue arginine 177 is part of the active site. The active-site Proton donor is the serine 226. Glutamate 296 is a catalytic residue.

Belongs to the MurB family. It depends on FAD as a cofactor.

Its subcellular location is the cytoplasm. It carries out the reaction UDP-N-acetyl-alpha-D-muramate + NADP(+) = UDP-N-acetyl-3-O-(1-carboxyvinyl)-alpha-D-glucosamine + NADPH + H(+). It participates in cell wall biogenesis; peptidoglycan biosynthesis. In terms of biological role, cell wall formation. This chain is UDP-N-acetylenolpyruvoylglucosamine reductase, found in Paramagnetospirillum magneticum (strain ATCC 700264 / AMB-1) (Magnetospirillum magneticum).